A 149-amino-acid polypeptide reads, in one-letter code: Putative pre-16S rRNA nuclease (149 aa).

Belongs to the YqgF nuclease family.

It localises to the cytoplasm. Its function is as follows. Could be a nuclease involved in processing of the 5'-end of pre-16S rRNA. The chain is Putative pre-16S rRNA nuclease from Cupriavidus metallidurans (strain ATCC 43123 / DSM 2839 / NBRC 102507 / CH34) (Ralstonia metallidurans).